The following is a 135-amino-acid chain: Snaclec echicetin subunit alpha (135 aa).

Residues 1-4 (GADE) form the signal peptide. Cystine bridges form between C6–C17, C34–C129, and C104–C121. The region spanning 13 to 130 (NGVYCYMLFK…CENTFPFMCK (118 aa)) is the C-type lectin domain.

This sequence belongs to the snaclec family. Heterodimer of subunits alpha and beta; disulfide-linked. Expressed by the venom gland.

It is found in the secreted. Functionally, binding of echicetin to GPIbalpha (GP1BA) receptor on platelets alone results in inhibition of platelet aggregation, while binding to both GP1BA receptor and IgMk promotes platelet aggregation and signal transduction. This chain is Snaclec echicetin subunit alpha, found in Echis carinatus (Saw-scaled viper).